The sequence spans 139 residues: Putative esterase PM0788 (139 aa).

The protein belongs to the thioesterase PaaI family.

This chain is Putative esterase PM0788, found in Pasteurella multocida (strain Pm70).